The sequence spans 564 residues: Mitochondrial distribution and morphology protein 34-1 (564 aa).

The region spanning 1-195 is the SMP-LTD domain; sequence MAFKFNWSPL…LPAIIHRLSL (195 aa). Polar residues-rich tracts occupy residues 297–322 and 329–352; these read PDQNDSSASVMSPISPPLSRTQSQTG and DNASTSSAQSRTPTGPTQSFSSYG. Disordered regions lie at residues 297-408, 414-433, and 452-473; these read PDQN…VTSA, HEQPDDPVTPPLSPESDQSL, and DLSSEIVRDRAEPSEPRNPFNT. Over residues 359–371 the composition is skewed to basic residues; that stretch reads RHSRAHARRRKKR. Low complexity predominate over residues 383–394; it reads SDSASVSVSDES. Polar residues predominate over residues 396-408; that stretch reads YTESASAPSVTSA. Positions 452-466 are enriched in basic and acidic residues; the sequence is DLSSEIVRDRAEPSE.

Belongs to the MDM34 family. Component of the ER-mitochondria encounter structure (ERMES) or MDM complex, composed of mmm1, mdm10, mdm12 and mdm34.

Its subcellular location is the mitochondrion outer membrane. Component of the ERMES/MDM complex, which serves as a molecular tether to connect the endoplasmic reticulum (ER) and mitochondria. Components of this complex are involved in the control of mitochondrial shape and protein biogenesis, and function in nonvesicular lipid trafficking between the ER and mitochondria. Mdm34 is required for the interaction of the ER-resident membrane protein mmm1 and the outer mitochondrial membrane-resident beta-barrel protein mdm10. This is Mitochondrial distribution and morphology protein 34-1 from Penicillium rubens (strain ATCC 28089 / DSM 1075 / NRRL 1951 / Wisconsin 54-1255) (Penicillium chrysogenum).